Reading from the N-terminus, the 898-residue chain is Phosphoenolpyruvate carboxylase (898 aa).

Catalysis depends on residues histidine 138 and lysine 561.

This sequence belongs to the PEPCase type 1 family. Mg(2+) serves as cofactor.

It carries out the reaction oxaloacetate + phosphate = phosphoenolpyruvate + hydrogencarbonate. Forms oxaloacetate, a four-carbon dicarboxylic acid source for the tricarboxylic acid cycle. This is Phosphoenolpyruvate carboxylase from Streptococcus pneumoniae serotype 4 (strain ATCC BAA-334 / TIGR4).